Here is a 1030-residue protein sequence, read N- to C-terminus: uncharacterized protein (1030 aa).

Residues 51 to 86 (IKVSFTAKDGELTCKCSCLANVDNCVHIVAVLLKYH) form an SWIM-type zinc finger. Residues 590–751 (RGLEENKFGG…WSCFDFVLPS (162 aa)) enclose the Helicase ATP-binding domain. 603–610 (DEMGLGKT) serves as a coordination point for ATP. Residues 702 to 705 (DEAQ) carry the DEAQ box motif. The Helicase C-terminal domain occupies 867 to 1021 (ALEIIHEAIE…EDVNFFESLT (155 aa)).

It belongs to the SNF2/RAD54 helicase family.

This is an uncharacterized protein from Mycoplasma pneumoniae (strain ATCC 29342 / M129 / Subtype 1) (Mycoplasmoides pneumoniae).